A 349-amino-acid chain; its full sequence is MSPLNVGIVGTGIFARDRHLPSYQEFPDKFKVIAAFNRHKAKALDFAKVADIPENKVYDNLDEILNDPHVDYIDALLPAQFNADIVEKAVKAGKPVILEKPIAANLDQAKEIVKIAESTPLPVGVAENWLYLPCIKIAKEQIEKIGPVVAFTHNSTGPFVTQNKYLTTTWRQKPEHIGGFLSDGGVHQLALVISLLGEFGSVSALTRQVRERSGADDIVFATVQLKNKEVIGSFTYGSAFGATEKSVFLKVYGKNGTVTVDLSDKKDPVVKVKLGGSAEDNGDEQIFKVDNDESFGVNAEFLNFHEAVSKKDKSLYLGTPRTAFHHLACVDAFLKSSAKNGDYVKIEQP.

Residue serine 2 is modified to Phosphoserine.

This is an uncharacterized protein from Saccharomyces cerevisiae (strain ATCC 204508 / S288c) (Baker's yeast).